A 105-amino-acid chain; its full sequence is Small ribosomal subunit protein uS17 (105 aa).

The protein belongs to the universal ribosomal protein uS17 family. In terms of assembly, part of the 30S ribosomal subunit.

Its function is as follows. One of the primary rRNA binding proteins, it binds specifically to the 5'-end of 16S ribosomal RNA. The chain is Small ribosomal subunit protein uS17 from Thermus thermophilus (strain ATCC BAA-163 / DSM 7039 / HB27).